A 127-amino-acid chain; its full sequence is Large ribosomal subunit protein bL17 (127 aa).

The protein belongs to the bacterial ribosomal protein bL17 family. Part of the 50S ribosomal subunit. Contacts protein L32.

In Levilactobacillus brevis (strain ATCC 367 / BCRC 12310 / CIP 105137 / JCM 1170 / LMG 11437 / NCIMB 947 / NCTC 947) (Lactobacillus brevis), this protein is Large ribosomal subunit protein bL17.